Reading from the N-terminus, the 452-residue chain is Bifunctional protein GlmU (452 aa).

Positions Met1 to Lys226 are pyrophosphorylase. Residues Leu9–Gly12, Lys23, Gln73, Gly78–Thr79, Tyr100–Asp102, Gly137, Glu151, Asn166, and Asn224 contribute to the UDP-N-acetyl-alpha-D-glucosamine site. Residue Asp102 participates in Mg(2+) binding. Asn224 lines the Mg(2+) pocket. Positions Val227–Gln247 are linker. The N-acetyltransferase stretch occupies residues Gly248 to Lys452. UDP-N-acetyl-alpha-D-glucosamine-binding residues include Arg330 and Lys348. His360 (proton acceptor) is an active-site residue. Tyr363 and Asn374 together coordinate UDP-N-acetyl-alpha-D-glucosamine. Acetyl-CoA is bound by residues Ala377, Asn383–Tyr384, Ser402, Ala420, and Arg437.

In the N-terminal section; belongs to the N-acetylglucosamine-1-phosphate uridyltransferase family. The protein in the C-terminal section; belongs to the transferase hexapeptide repeat family. As to quaternary structure, homotrimer. It depends on Mg(2+) as a cofactor.

The protein resides in the cytoplasm. The catalysed reaction is alpha-D-glucosamine 1-phosphate + acetyl-CoA = N-acetyl-alpha-D-glucosamine 1-phosphate + CoA + H(+). The enzyme catalyses N-acetyl-alpha-D-glucosamine 1-phosphate + UTP + H(+) = UDP-N-acetyl-alpha-D-glucosamine + diphosphate. It functions in the pathway nucleotide-sugar biosynthesis; UDP-N-acetyl-alpha-D-glucosamine biosynthesis; N-acetyl-alpha-D-glucosamine 1-phosphate from alpha-D-glucosamine 6-phosphate (route II): step 2/2. Its pathway is nucleotide-sugar biosynthesis; UDP-N-acetyl-alpha-D-glucosamine biosynthesis; UDP-N-acetyl-alpha-D-glucosamine from N-acetyl-alpha-D-glucosamine 1-phosphate: step 1/1. It participates in bacterial outer membrane biogenesis; LPS lipid A biosynthesis. In terms of biological role, catalyzes the last two sequential reactions in the de novo biosynthetic pathway for UDP-N-acetylglucosamine (UDP-GlcNAc). The C-terminal domain catalyzes the transfer of acetyl group from acetyl coenzyme A to glucosamine-1-phosphate (GlcN-1-P) to produce N-acetylglucosamine-1-phosphate (GlcNAc-1-P), which is converted into UDP-GlcNAc by the transfer of uridine 5-monophosphate (from uridine 5-triphosphate), a reaction catalyzed by the N-terminal domain. The chain is Bifunctional protein GlmU from Ruthia magnifica subsp. Calyptogena magnifica.